The sequence spans 121 residues: Large ribosomal subunit protein bL12 (121 aa).

The protein belongs to the bacterial ribosomal protein bL12 family. In terms of assembly, homodimer. Part of the ribosomal stalk of the 50S ribosomal subunit. Forms a multimeric L10(L12)X complex, where L10 forms an elongated spine to which 2 to 4 L12 dimers bind in a sequential fashion. Binds GTP-bound translation factors.

In terms of biological role, forms part of the ribosomal stalk which helps the ribosome interact with GTP-bound translation factors. Is thus essential for accurate translation. This Limosilactobacillus fermentum (strain NBRC 3956 / LMG 18251) (Lactobacillus fermentum) protein is Large ribosomal subunit protein bL12.